A 434-amino-acid polypeptide reads, in one-letter code: Zinc finger protein Pegasus (434 aa).

Residues Val33–Pro57 form a disordered region. C2H2-type zinc fingers lie at residues Leu82–His104, His110–His132, and Tyr138–His161. The segment covering Gly260–Ser274 has biased composition (polar residues). The segment at Gly260 to Ala357 is disordered. A compositionally biased stretch (low complexity) spans Cys296–Pro313. The segment covering Arg337–Ser349 has biased composition (polar residues). 2 consecutive C2H2-type zinc fingers follow at residues His364–His386 and Phe392–His419.

It belongs to the Ikaros C2H2-type zinc-finger protein family. In terms of assembly, probably self-associates.

It is found in the nucleus. In terms of biological role, transcriptional repressor that binds the core 5'GNNTGTNG-3' DNA consensus sequence. The protein is Zinc finger protein Pegasus (ikzf5) of Xenopus tropicalis (Western clawed frog).